The chain runs to 361 residues: MLYWLIDLSSSFPAFNVFRYITFRTGGAMVTGALFVFMFGPWIIDNLRLRQGKGQPIRTDGPQSHLMTKKGTPTMGGLMILSGLTVGTVLWANPLNPYVWIVLAVTLGFGFVGFYDDYMKVTKQTHAGISGRTRLLIEFIIAGAACFALVWLGRAPLSSSLVIPFFKEVMLNLGWAFVVFGAFVVVGAGNAVNLTDGLDGLAIVPVMIAAASFGLISYLAGNAVFAEYLQINYVAGTGELAVLCGALLGAGLGFLWFNAPPASIFMGDTGSLALGGMLGSIAVAVKHEIVLAVIGGLFVLEAVSVIVQVASFKLTGKRVFKMAPIHHHFEQKGWTEPQIVIRFWIIAVMLALAGLSTLKLR.

A run of 10 helical transmembrane segments spans residues 25 to 45 (TGGAMVTGALFVFMFGPWIID), 72 to 92 (TPTMGGLMILSGLTVGTVLWA), 95 to 115 (LNPYVWIVLAVTLGFGFVGFY), 135 to 155 (LLIEFIIAGAACFALVWLGRA), 169 to 189 (VMLNLGWAFVVFGAFVVVGAG), 200 to 220 (GLAIVPVMIAAASFGLISYLA), 240 to 260 (LAVLCGALLGAGLGFLWFNAP), 264 to 284 (IFMGDTGSLALGGMLGSIAVA), 289 to 309 (IVLAVIGGLFVLEAVSVIVQV), and 338 to 358 (QIVIRFWIIAVMLALAGLSTL).

Belongs to the glycosyltransferase 4 family. MraY subfamily. Requires Mg(2+) as cofactor.

It is found in the cell inner membrane. It carries out the reaction UDP-N-acetyl-alpha-D-muramoyl-L-alanyl-gamma-D-glutamyl-meso-2,6-diaminopimeloyl-D-alanyl-D-alanine + di-trans,octa-cis-undecaprenyl phosphate = di-trans,octa-cis-undecaprenyl diphospho-N-acetyl-alpha-D-muramoyl-L-alanyl-D-glutamyl-meso-2,6-diaminopimeloyl-D-alanyl-D-alanine + UMP. Its pathway is cell wall biogenesis; peptidoglycan biosynthesis. Its function is as follows. Catalyzes the initial step of the lipid cycle reactions in the biosynthesis of the cell wall peptidoglycan: transfers peptidoglycan precursor phospho-MurNAc-pentapeptide from UDP-MurNAc-pentapeptide onto the lipid carrier undecaprenyl phosphate, yielding undecaprenyl-pyrophosphoryl-MurNAc-pentapeptide, known as lipid I. The polypeptide is Phospho-N-acetylmuramoyl-pentapeptide-transferase (Rhodopseudomonas palustris (strain TIE-1)).